A 525-amino-acid chain; its full sequence is tRNA-2-methylthio-N(6)-dimethylallyladenosine synthase (525 aa).

An MTTase N-terminal domain is found at 14 to 130 (RTYQVRTYGC…LPTLLERARH (117 aa)). Residues Cys23, Cys59, Cys93, Cys167, Cys171, and Cys174 each contribute to the [4Fe-4S] cluster site. The region spanning 153 to 400 (RESAYAGWVS…IELQERISLE (248 aa)) is the Radical SAM core domain. One can recognise a TRAM domain in the interval 403–482 (QAQVGRTLEL…PHHLIADGAL (80 aa)).

The protein belongs to the methylthiotransferase family. MiaB subfamily. As to quaternary structure, monomer. [4Fe-4S] cluster serves as cofactor.

It localises to the cytoplasm. It catalyses the reaction N(6)-dimethylallyladenosine(37) in tRNA + (sulfur carrier)-SH + AH2 + 2 S-adenosyl-L-methionine = 2-methylsulfanyl-N(6)-dimethylallyladenosine(37) in tRNA + (sulfur carrier)-H + 5'-deoxyadenosine + L-methionine + A + S-adenosyl-L-homocysteine + 2 H(+). Functionally, catalyzes the methylthiolation of N6-(dimethylallyl)adenosine (i(6)A), leading to the formation of 2-methylthio-N6-(dimethylallyl)adenosine (ms(2)i(6)A) at position 37 in tRNAs that read codons beginning with uridine. The chain is tRNA-2-methylthio-N(6)-dimethylallyladenosine synthase from Mycobacterium sp. (strain MCS).